The chain runs to 515 residues: Endoglucanase 23 (515 aa).

An N-terminal signal peptide occupies residues methionine 1–alanine 29. Catalysis depends on aspartate 95, which acts as the Nucleophile. Residues asparagine 178, asparagine 375, and asparagine 384 are each glycosylated (N-linked (GlcNAc...) asparagine). Histidine 426 is an active-site residue. The N-linked (GlcNAc...) asparagine glycan is linked to asparagine 452. Active-site residues include aspartate 477 and glutamate 486.

This sequence belongs to the glycosyl hydrolase 9 (cellulase E) family.

It localises to the secreted. It carries out the reaction Endohydrolysis of (1-&gt;4)-beta-D-glucosidic linkages in cellulose, lichenin and cereal beta-D-glucans.. The polypeptide is Endoglucanase 23 (GLU12) (Oryza sativa subsp. japonica (Rice)).